Consider the following 429-residue polypeptide: Bifunctional protein GlmU (429 aa).

Positions 1–223 are pyrophosphorylase; sequence MKTSILILAA…EDEFMGINDK (223 aa). UDP-N-acetyl-alpha-D-glucosamine contacts are provided by residues 8–11, Lys-22, and 81–82; these read LAAG and GT. Residue Asp-102 coordinates Mg(2+). 4 residues coordinate UDP-N-acetyl-alpha-D-glucosamine: Gly-135, Glu-149, Asn-164, and Asn-221. Residue Asn-221 participates in Mg(2+) binding. The interval 224 to 244 is linker; the sequence is FELSIAENFMQEKIKKYWMQQ. Residues 245-429 form an N-acetyltransferase region; the sequence is GVIFHLPQST…KDYYYKKFQK (185 aa). Residues Arg-308 and Lys-325 each coordinate UDP-N-acetyl-alpha-D-glucosamine. The Proton acceptor role is filled by His-336. Residues Tyr-339 and Asn-350 each contribute to the UDP-N-acetyl-alpha-D-glucosamine site. Residues 359–360, Ser-378, Ala-396, and Arg-413 each bind acetyl-CoA; that span reads NY.

In the N-terminal section; belongs to the N-acetylglucosamine-1-phosphate uridyltransferase family. The protein in the C-terminal section; belongs to the transferase hexapeptide repeat family. Homotrimer. Mg(2+) serves as cofactor.

Its subcellular location is the cytoplasm. The enzyme catalyses alpha-D-glucosamine 1-phosphate + acetyl-CoA = N-acetyl-alpha-D-glucosamine 1-phosphate + CoA + H(+). It catalyses the reaction N-acetyl-alpha-D-glucosamine 1-phosphate + UTP + H(+) = UDP-N-acetyl-alpha-D-glucosamine + diphosphate. Its pathway is nucleotide-sugar biosynthesis; UDP-N-acetyl-alpha-D-glucosamine biosynthesis; N-acetyl-alpha-D-glucosamine 1-phosphate from alpha-D-glucosamine 6-phosphate (route II): step 2/2. It functions in the pathway nucleotide-sugar biosynthesis; UDP-N-acetyl-alpha-D-glucosamine biosynthesis; UDP-N-acetyl-alpha-D-glucosamine from N-acetyl-alpha-D-glucosamine 1-phosphate: step 1/1. The protein operates within bacterial outer membrane biogenesis; LPS lipid A biosynthesis. Its function is as follows. Catalyzes the last two sequential reactions in the de novo biosynthetic pathway for UDP-N-acetylglucosamine (UDP-GlcNAc). The C-terminal domain catalyzes the transfer of acetyl group from acetyl coenzyme A to glucosamine-1-phosphate (GlcN-1-P) to produce N-acetylglucosamine-1-phosphate (GlcNAc-1-P), which is converted into UDP-GlcNAc by the transfer of uridine 5-monophosphate (from uridine 5-triphosphate), a reaction catalyzed by the N-terminal domain. This is Bifunctional protein GlmU from Campylobacter jejuni subsp. jejuni serotype O:23/36 (strain 81-176).